A 493-amino-acid polypeptide reads, in one-letter code: Transmembrane protein 145 (493 aa).

The chain crosses the membrane as a helical span at residues 9 to 29 (LRRLLPPLLLLLLSLPPRARA). Residue Asn35 is glycosylated (N-linked (GlcNAc...) asparagine). Helical transmembrane passes span 175–195 (VTFL…GYLL), 207–227 (MFMA…IYWG), 241–261 (ILAK…LILL), 282–302 (VYMT…AEFF), 318–338 (GLIG…LVSL), 349–369 (VPFF…ALIA), and 381–401 (IVNG…LIMT). Asn444 is a glycosylation site (N-linked (GlcNAc...) asparagine). The interval 464-493 (PATSPLPRAAPDSGLPLFRDLRPPGPLRDL) is disordered.

It is found in the membrane. The chain is Transmembrane protein 145 (TMEM145) from Homo sapiens (Human).